A 227-amino-acid chain; its full sequence is Cytochrome c oxidase subunit 2 (227 aa).

Residues 1–14 (MAHPVQLGFQDAAS) lie on the Mitochondrial intermembrane side of the membrane. A helical transmembrane segment spans residues 15-45 (PIMEELLYFHDHTLMIMFLISSLVLYIISLM). Topologically, residues 46–59 (LTTKLTHTSTMDAQ) are mitochondrial matrix. A helical membrane pass occupies residues 60–87 (EVETVWTILPAAILILIALPSLRILYMM). Over 88–227 (DEITSPSLTL…HFEEWLLFTL (140 aa)) the chain is Mitochondrial intermembrane. Cu cation-binding residues include histidine 161, cysteine 196, glutamate 198, cysteine 200, histidine 204, and methionine 207. Glutamate 198 lines the Mg(2+) pocket.

It belongs to the cytochrome c oxidase subunit 2 family. Component of the cytochrome c oxidase (complex IV, CIV), a multisubunit enzyme composed of 14 subunits. The complex is composed of a catalytic core of 3 subunits MT-CO1, MT-CO2 and MT-CO3, encoded in the mitochondrial DNA, and 11 supernumerary subunits COX4I, COX5A, COX5B, COX6A, COX6B, COX6C, COX7A, COX7B, COX7C, COX8 and NDUFA4, which are encoded in the nuclear genome. The complex exists as a monomer or a dimer and forms supercomplexes (SCs) in the inner mitochondrial membrane with NADH-ubiquinone oxidoreductase (complex I, CI) and ubiquinol-cytochrome c oxidoreductase (cytochrome b-c1 complex, complex III, CIII), resulting in different assemblies (supercomplex SCI(1)III(2)IV(1) and megacomplex MCI(2)III(2)IV(2)). Found in a complex with TMEM177, COA6, COX18, COX20, SCO1 and SCO2. Interacts with TMEM177 in a COX20-dependent manner. Interacts with COX20. Interacts with COX16. It depends on Cu cation as a cofactor.

Its subcellular location is the mitochondrion inner membrane. The catalysed reaction is 4 Fe(II)-[cytochrome c] + O2 + 8 H(+)(in) = 4 Fe(III)-[cytochrome c] + 2 H2O + 4 H(+)(out). Its function is as follows. Component of the cytochrome c oxidase, the last enzyme in the mitochondrial electron transport chain which drives oxidative phosphorylation. The respiratory chain contains 3 multisubunit complexes succinate dehydrogenase (complex II, CII), ubiquinol-cytochrome c oxidoreductase (cytochrome b-c1 complex, complex III, CIII) and cytochrome c oxidase (complex IV, CIV), that cooperate to transfer electrons derived from NADH and succinate to molecular oxygen, creating an electrochemical gradient over the inner membrane that drives transmembrane transport and the ATP synthase. Cytochrome c oxidase is the component of the respiratory chain that catalyzes the reduction of oxygen to water. Electrons originating from reduced cytochrome c in the intermembrane space (IMS) are transferred via the dinuclear copper A center (CU(A)) of subunit 2 and heme A of subunit 1 to the active site in subunit 1, a binuclear center (BNC) formed by heme A3 and copper B (CU(B)). The BNC reduces molecular oxygen to 2 water molecules using 4 electrons from cytochrome c in the IMS and 4 protons from the mitochondrial matrix. This is Cytochrome c oxidase subunit 2 (MT-CO2) from Varecia variegata (Black-and-white ruffed lemur).